Reading from the N-terminus, the 102-residue chain is NADH-quinone oxidoreductase subunit K 1 (102 aa).

Transmembrane regions (helical) follow at residues 5–25 (FEHVLILAGILFALGLVCVLV), 30–50 (LIMLLIGIEVMLNAAMLAFVG), and 65–85 (LVIMALTSAEVSLALAMVVYL).

The protein belongs to the complex I subunit 4L family. In terms of assembly, NDH-1 is composed of 14 different subunits. Subunits NuoA, H, J, K, L, M, N constitute the membrane sector of the complex.

Its subcellular location is the cell inner membrane. The enzyme catalyses a quinone + NADH + 5 H(+)(in) = a quinol + NAD(+) + 4 H(+)(out). NDH-1 shuttles electrons from NADH, via FMN and iron-sulfur (Fe-S) centers, to quinones in the respiratory chain. The immediate electron acceptor for the enzyme in this species is believed to be ubiquinone. Couples the redox reaction to proton translocation (for every two electrons transferred, four hydrogen ions are translocated across the cytoplasmic membrane), and thus conserves the redox energy in a proton gradient. This Geobacter metallireducens (strain ATCC 53774 / DSM 7210 / GS-15) protein is NADH-quinone oxidoreductase subunit K 1.